The primary structure comprises 551 residues: Tetrachloroethene reductive dehalogenase (551 aa).

A signal peptide (tat-type signal) is located at residues 1–39 (MGEINRRNFLKASMLGAAAAAVASASVVKGVVSPLVADA). The 30-residue stretch at 411–440 (PRKFGVREFCRLCKKCADACPAQAISHEKD) folds into the 4Fe-4S ferredoxin-type 1 domain. Residues cysteine 420, cysteine 423, cysteine 426, cysteine 430, cysteine 467, cysteine 478, cysteine 481, and cysteine 485 each coordinate [4Fe-4S] cluster. The 19-residue stretch at 478 to 496 (CSNCVAVCSWNKVETWNHD) folds into the 4Fe-4S ferredoxin-type 2 domain.

This sequence belongs to the PceA family. The cofactor is [4Fe-4S] cluster. Corrinoid serves as cofactor. Post-translationally, predicted to be exported by the Tat system. The position of the signal peptide cleavage has been experimentally proven.

Its subcellular location is the cell membrane. The enzyme catalyses trichloroethene + chloride + A + H(+) = tetrachloroethene + AH2. The catalysed reaction is trichloroethene + AH2 = (Z)-1,2-dichloroethene + chloride + A + H(+). Catalyzes the reductive dechlorination of tetrachloroethene (PCE) to trichloroethene (TCE) and of trichloroethene to cis-1,2-dichloroethene (DCE). Reduced methyl viologen can act as the artificial electron donor. The chain is Tetrachloroethene reductive dehalogenase from Desulfitobacterium hafniense (Desulfitobacterium frappieri).